A 505-amino-acid polypeptide reads, in one-letter code: Ribose import ATP-binding protein RbsA 2 (505 aa).

ABC transporter domains lie at 13 to 249 (LALE…VGRD) and 259 to 503 (VRAG…TGRA). 45-52 (GENGAGKS) provides a ligand contact to ATP.

It belongs to the ABC transporter superfamily. Ribose importer (TC 3.A.1.2.1) family. In terms of assembly, the complex is composed of an ATP-binding protein (RbsA), two transmembrane proteins (RbsC) and a solute-binding protein (RbsB).

It localises to the cell membrane. It carries out the reaction D-ribose(out) + ATP + H2O = D-ribose(in) + ADP + phosphate + H(+). Its function is as follows. Part of the ABC transporter complex RbsABC involved in ribose import. Responsible for energy coupling to the transport system. The polypeptide is Ribose import ATP-binding protein RbsA 2 (Streptomyces avermitilis (strain ATCC 31267 / DSM 46492 / JCM 5070 / NBRC 14893 / NCIMB 12804 / NRRL 8165 / MA-4680)).